A 360-amino-acid chain; its full sequence is MSRVYNFSAGPAAIPEEVLFTVRDELLDWHGIGMSIAEVSHRGEEFIGVAEEAERDLRELLAVPESYHILFLQGGSRLQFAMVPMNLLANHKKAVYIDSGVWSNLAIREAKNYCDPHLATNAKELNYTGIPDQATWDMPNEAAYFYYVDNETVNGIEFPFIPDTDLTLVCDMSSNLLSRPFDVSRYGLIFACAQKNMGLAGLTIVIVHDDLLKRSPLPTTPSYLQYALHAKERSFINTPPTFAWYLAGLIFKWVKNQGGVAVLAERNQRKAAKLYKFIDKSNFFDNPINPTYRSRMNVIFRLADEILNSLFLKEATENGLANLKGHRLLGGMRASIYNAMTEEGVDALINFMGQFEKRHG.

Residue R42 participates in L-glutamate binding. Pyridoxal 5'-phosphate contacts are provided by W102, T152, D171, and Q194. The residue at position 195 (K195) is an N6-(pyridoxal phosphate)lysine. 237–238 (NT) is a binding site for pyridoxal 5'-phosphate.

It belongs to the class-V pyridoxal-phosphate-dependent aminotransferase family. SerC subfamily. Homodimer. Pyridoxal 5'-phosphate serves as cofactor.

Its subcellular location is the cytoplasm. The catalysed reaction is O-phospho-L-serine + 2-oxoglutarate = 3-phosphooxypyruvate + L-glutamate. It carries out the reaction 4-(phosphooxy)-L-threonine + 2-oxoglutarate = (R)-3-hydroxy-2-oxo-4-phosphooxybutanoate + L-glutamate. Its pathway is amino-acid biosynthesis; L-serine biosynthesis; L-serine from 3-phospho-D-glycerate: step 2/3. It participates in cofactor biosynthesis; pyridoxine 5'-phosphate biosynthesis; pyridoxine 5'-phosphate from D-erythrose 4-phosphate: step 3/5. Functionally, catalyzes the reversible conversion of 3-phosphohydroxypyruvate to phosphoserine and of 3-hydroxy-2-oxo-4-phosphonooxybutanoate to phosphohydroxythreonine. The sequence is that of Phosphoserine aminotransferase from Coxiella burnetii (strain Dugway 5J108-111).